A 328-amino-acid chain; its full sequence is Tetraacyldisaccharide 4'-kinase (328 aa).

Residue 59-66 (TAGGNGKT) coordinates ATP.

The protein belongs to the LpxK family.

It catalyses the reaction a lipid A disaccharide + ATP = a lipid IVA + ADP + H(+). The protein operates within glycolipid biosynthesis; lipid IV(A) biosynthesis; lipid IV(A) from (3R)-3-hydroxytetradecanoyl-[acyl-carrier-protein] and UDP-N-acetyl-alpha-D-glucosamine: step 6/6. Functionally, transfers the gamma-phosphate of ATP to the 4'-position of a tetraacyldisaccharide 1-phosphate intermediate (termed DS-1-P) to form tetraacyldisaccharide 1,4'-bis-phosphate (lipid IVA). The protein is Tetraacyldisaccharide 4'-kinase of Aliivibrio fischeri (strain MJ11) (Vibrio fischeri).